The primary structure comprises 331 residues: Zinc finger CW-type PWWP domain protein 2 homolog (331 aa).

Residues 9–64 form a CW-type zinc finger; the sequence is EFVHRTWVQCENESCLKWRLLSPAAAAAVNPSEPWYCFMNTDPSYSSCSVSEEDFP. Cys18, Cys23, Cys45, and Cys56 together coordinate Zn(2+). The PWWP domain maps to 83–147; it reads LGSLVLVKLR…AAFVGHFSLT (65 aa). The interval 264 to 295 is disordered; the sequence is IQEPTAREDESQGEQLSQCSPESPTGSPFQSY. Residues 276 to 293 show a composition bias toward polar residues; sequence GEQLSQCSPESPTGSPFQ.

Functionally, histone methylation reader which binds to non-methylated (H3K4me0), monomethylated (H3K4me1), dimethylated (H3K4me2) and trimethylated (H3K4me3) 'Lys-4' on histone H3. The order of binding preference is H3K4me3 &gt; H3K4me2 &gt; H3K4me1 &gt; H3K4me0. This is Zinc finger CW-type PWWP domain protein 2 homolog (Zcwpw2) from Mus musculus (Mouse).